A 561-amino-acid chain; its full sequence is Phosphatidylinositol 4-kinase gamma 1 (561 aa).

Residues 121-416 (GAQPLLLPSG…SVFGKTSEDS (296 aa)) enclose the PI3K/PI4K catalytic domain. The tract at residues 127 to 133 (LPSGMGG) is G-loop. ATP is bound by residues 128-134 (PSGMGGA), Lys-149, and 233-236 (QRFV). The segment at 266 to 274 (LNLDRHAGN) is catalytic loop. The activation loop stretch occupies residues 296–322 (PIDHGLCLPECLDDPYFEWLNWPQALV). Asp-298 is a binding site for ATP. Positions 456–520 (PPLVPRGPRA…PISPNHDESK (65 aa)) are disordered. Residues 467 to 484 (TIPNDVTASMSSSQNQRI) are compositionally biased toward polar residues.

This sequence belongs to the PI3/PI4-kinase family. Type II PI4K subfamily.

It catalyses the reaction a 1,2-diacyl-sn-glycero-3-phospho-(1D-myo-inositol) + ATP = a 1,2-diacyl-sn-glycero-3-phospho-(1D-myo-inositol 4-phosphate) + ADP + H(+). The phosphorylation of phosphatidylinositol (PI) to PI4P is the first committed step in the generation of phosphatidylinositol 4,5-bisphosphate (PIP2), a precursor of the second messenger inositol 1,4,5-trisphosphate (InsP3). In Arabidopsis thaliana (Mouse-ear cress), this protein is Phosphatidylinositol 4-kinase gamma 1 (PI4KG1).